Here is a 164-residue protein sequence, read N- to C-terminus: ATP synthase subunit b (164 aa).

Residues Ser10–Phe32 traverse the membrane as a helical segment.

The protein belongs to the ATPase B chain family. In terms of assembly, F-type ATPases have 2 components, F(1) - the catalytic core - and F(0) - the membrane proton channel. F(1) has five subunits: alpha(3), beta(3), gamma(1), delta(1), epsilon(1). F(0) has three main subunits: a(1), b(2) and c(10-14). The alpha and beta chains form an alternating ring which encloses part of the gamma chain. F(1) is attached to F(0) by a central stalk formed by the gamma and epsilon chains, while a peripheral stalk is formed by the delta and b chains.

The protein localises to the cell inner membrane. Its function is as follows. F(1)F(0) ATP synthase produces ATP from ADP in the presence of a proton or sodium gradient. F-type ATPases consist of two structural domains, F(1) containing the extramembraneous catalytic core and F(0) containing the membrane proton channel, linked together by a central stalk and a peripheral stalk. During catalysis, ATP synthesis in the catalytic domain of F(1) is coupled via a rotary mechanism of the central stalk subunits to proton translocation. Component of the F(0) channel, it forms part of the peripheral stalk, linking F(1) to F(0). The chain is ATP synthase subunit b from Thermotoga maritima (strain ATCC 43589 / DSM 3109 / JCM 10099 / NBRC 100826 / MSB8).